Consider the following 463-residue polypeptide: Chromosomal replication initiator protein DnaA (463 aa).

Residues 1-83 (MSTNQIILTD…LQLFQHYNNT (83 aa)) form a domain I, interacts with DnaA modulators region. The segment at 83–124 (TIKSVEIITKELPGTSKTVIELPTKTFADIGSSELNAENIFS) is domain II. The interval 125-343 (TLDVRFTFDN…GALNKVIAHS (219 aa)) is domain III, AAA+ region. ATP is bound by residues Gly171, Gly173, Lys174, and Thr175. The interval 344–463 (NFTLKEITLE…INLLMKILQN (120 aa)) is domain IV, binds dsDNA.

Belongs to the DnaA family. As to quaternary structure, oligomerizes as a right-handed, spiral filament on DNA at oriC.

Its subcellular location is the cytoplasm. Functionally, plays an essential role in the initiation and regulation of chromosomal replication. ATP-DnaA binds to the origin of replication (oriC) to initiate formation of the DNA replication initiation complex once per cell cycle. Binds the DnaA box (a 9 base pair repeat at the origin) and separates the double-stranded (ds)DNA. Forms a right-handed helical filament on oriC DNA; dsDNA binds to the exterior of the filament while single-stranded (ss)DNA is stabiized in the filament's interior. The ATP-DnaA-oriC complex binds and stabilizes one strand of the AT-rich DNA unwinding element (DUE), permitting loading of DNA polymerase. After initiation quickly degrades to an ADP-DnaA complex that is not apt for DNA replication. Binds acidic phospholipids. The protein is Chromosomal replication initiator protein DnaA of Rickettsia canadensis (strain McKiel).